We begin with the raw amino-acid sequence, 837 residues long: Anaphase-promoting complex subunit 4 (837 aa).

Low complexity-rich tracts occupy residues 59 to 81 and 547 to 581; these read NDNN…NDNN and SSSS…NNNN. 2 disordered regions span residues 59-89 and 547-588; these read NDNN…KSNK and SSSS…QSGN.

Belongs to the APC4 family. The APC/C is composed of at least 13 subunits that stay tightly associated throughout the cell cycle: anapc1, anapc2, anapc3, anapc4, anapc5, anapc6, anapc7, anapc8, anapc10, anapc11, cdc20, cdc26 and cdh1.

The protein resides in the nucleus. Its pathway is protein modification; protein ubiquitination. Component of the anaphase promoting complex/cyclosome (APC/C), a cell cycle-regulated E3 ubiquitin-protein ligase complex that controls progression through mitosis and the G1 phase of the cell cycle. In Dictyostelium discoideum (Social amoeba), this protein is Anaphase-promoting complex subunit 4 (anapc4).